The sequence spans 108 residues: Resistin (108 aa).

The first 18 residues, 1–18 (MKALCLLLLPVLGLLVSS), serve as a signal peptide directing secretion. Intrachain disulfides connect C51–C104, C63–C103, C72–C89, C74–C91, and C78–C93.

Belongs to the resistin/FIZZ family. In terms of assembly, homodimer; disulfide-linked. Interacts with DEFA1. Expressed in white adipose tissue (at protein level). Widely expressed, with particularly strong expression in lung, bone marrow, breast and peripheral blood. Expressed strongly in bone marrow and at lower levels in lung, but not detected in other tissues. Isoform 2 is detected in adipose tissue, bone marrow, brain, lung, peripheral blood, placenta and thymus.

Its subcellular location is the secreted. Hormone that seems to suppress insulin ability to stimulate glucose uptake into adipose cells. Potentially links obesity to diabetes. Promotes chemotaxis in myeloid cells. The protein is Resistin (RETN) of Homo sapiens (Human).